The chain runs to 407 residues: Na(+)-translocating NADH-quinone reductase subunit F (407 aa).

Residues 3 to 23 (IILGVVMFTLIVLALTVMILF) traverse the membrane as a helical segment. A 2Fe-2S ferredoxin-type domain is found at 32–126 (GDITIDINED…NLKIELPEEI (95 aa)). Cys69, Cys75, Cys78, and Cys110 together coordinate [2Fe-2S] cluster. The FAD-binding FR-type domain maps to 129–269 (VKKWECEVIS…SGPFGEFFAK (141 aa)).

This sequence belongs to the NqrF family. Composed of six subunits; NqrA, NqrB, NqrC, NqrD, NqrE and NqrF. Requires [2Fe-2S] cluster as cofactor. It depends on FAD as a cofactor.

It localises to the cell inner membrane. The catalysed reaction is a ubiquinone + n Na(+)(in) + NADH + H(+) = a ubiquinol + n Na(+)(out) + NAD(+). Its function is as follows. NQR complex catalyzes the reduction of ubiquinone-1 to ubiquinol by two successive reactions, coupled with the transport of Na(+) ions from the cytoplasm to the periplasm. The first step is catalyzed by NqrF, which accepts electrons from NADH and reduces ubiquinone-1 to ubisemiquinone by a one-electron transfer pathway. The protein is Na(+)-translocating NADH-quinone reductase subunit F of Yersinia enterocolitica serotype O:8 / biotype 1B (strain NCTC 13174 / 8081).